We begin with the raw amino-acid sequence, 289 residues long: Mitochondrial fission regulator 1-like (289 aa).

Thr-27 bears the Phosphothreonine mark. A Phosphoserine modification is found at Ser-38. Ser-100 is modified (phosphoserine; by AMPK). A phosphoserine mark is found at Ser-107, Ser-221, and Ser-222. Ser-235 carries the post-translational modification Phosphoserine; by AMPK. A phosphoserine mark is found at Ser-258 and Ser-270.

This sequence belongs to the MTFR1 family. Post-translationally, phosphorylated by AMPK. Upon stress, phosphorylation at Ser-100 and Ser-235 by AMPK is sufficient to induce mitochondrial fragmentation.

The protein localises to the mitochondrion outer membrane. In terms of biological role, mitochondrial protein required for adaptation of miochondrial dynamics to metabolic changes. Regulates mitochondrial morphology at steady state and mediates AMPK-dependent stress-induced mitochondrial fragmentation via the control of OPA1 levels. This Mus musculus (Mouse) protein is Mitochondrial fission regulator 1-like (Mtfr1l).